Consider the following 466-residue polypeptide: 3-isopropylmalate dehydratase large subunit (466 aa).

[4Fe-4S] cluster-binding residues include Cys-349, Cys-410, and Cys-413.

It belongs to the aconitase/IPM isomerase family. LeuC type 1 subfamily. As to quaternary structure, heterodimer of LeuC and LeuD. [4Fe-4S] cluster is required as a cofactor.

The catalysed reaction is (2R,3S)-3-isopropylmalate = (2S)-2-isopropylmalate. Its pathway is amino-acid biosynthesis; L-leucine biosynthesis; L-leucine from 3-methyl-2-oxobutanoate: step 2/4. Catalyzes the isomerization between 2-isopropylmalate and 3-isopropylmalate, via the formation of 2-isopropylmaleate. The polypeptide is 3-isopropylmalate dehydratase large subunit (Vesicomyosocius okutanii subsp. Calyptogena okutanii (strain HA)).